Reading from the N-terminus, the 72-residue chain is Translation initiation factor IF-1 (72 aa).

In terms of domain architecture, S1-like spans 1–72 (MSKSDYIELE…TKGRITFRHK (72 aa)).

This sequence belongs to the IF-1 family. In terms of assembly, component of the 30S ribosomal translation pre-initiation complex which assembles on the 30S ribosome in the order IF-2 and IF-3, IF-1 and N-formylmethionyl-tRNA(fMet); mRNA recruitment can occur at any time during PIC assembly.

It localises to the cytoplasm. Its function is as follows. One of the essential components for the initiation of protein synthesis. Stabilizes the binding of IF-2 and IF-3 on the 30S subunit to which N-formylmethionyl-tRNA(fMet) subsequently binds. Helps modulate mRNA selection, yielding the 30S pre-initiation complex (PIC). Upon addition of the 50S ribosomal subunit IF-1, IF-2 and IF-3 are released leaving the mature 70S translation initiation complex. The chain is Translation initiation factor IF-1 from Vesicomyosocius okutanii subsp. Calyptogena okutanii (strain HA).